We begin with the raw amino-acid sequence, 493 residues long: (+)-menthofuran synthase (493 aa).

Position 1 (Met1) is a topological domain, cytoplasmic. A helical; Signal-anchor for type II membrane protein transmembrane segment spans residues 2 to 19 (AALLVFFSVSLILLAVLF). At 20–493 (HKRKSSLSSR…LLVLATPRQS (474 aa)) the chain is on the lumenal side. Residue Asn169 is glycosylated (N-linked (GlcNAc...) asparagine). Position 434 (Cys434) interacts with heme.

It belongs to the cytochrome P450 family. Heme is required as a cofactor.

It localises to the membrane. The catalysed reaction is (R)-pulegone + reduced [NADPH--hemoprotein reductase] + O2 = (R)-menthofuran + oxidized [NADPH--hemoprotein reductase] + 2 H2O + H(+). It functions in the pathway secondary metabolite biosynthesis; terpenoid biosynthesis. Monoterpene synthase that catalyzes the formation of (+)-menthofuran from (+)-pulegone. In Mentha piperita (Peppermint), this protein is (+)-menthofuran synthase.